A 291-amino-acid chain; its full sequence is MAVGKEILTKIRSVQNTQKITKAMQMVSTSKMRKTQERMSLARPYAEKVRMVMSHLAQTNTDHGIPLLESHREIRRVGFILITSDKGLCGGLNANVLKKFLAQVQEYRNQGIEEEIVCLGSKGLMACQSIGLNVVASAVNLGDTPKMEMLLGPLTELFQRYEKHEIDRIHLVYSGFVNTMRQEPRMEVLLPIGENVIGDSAPKSPFSWEYRYEPTALAVLEYLVRRYLESVVYQALSDNMASEQAARMVAMKAATDNAGNAIKELRLVYNKSRQAAITTELSEIVAGAAAV.

This sequence belongs to the ATPase gamma chain family. F-type ATPases have 2 components, CF(1) - the catalytic core - and CF(0) - the membrane proton channel. CF(1) has five subunits: alpha(3), beta(3), gamma(1), delta(1), epsilon(1). CF(0) has three main subunits: a, b and c.

It localises to the cell inner membrane. In terms of biological role, produces ATP from ADP in the presence of a proton gradient across the membrane. The gamma chain is believed to be important in regulating ATPase activity and the flow of protons through the CF(0) complex. The sequence is that of ATP synthase gamma chain from Neisseria gonorrhoeae (strain ATCC 700825 / FA 1090).